The following is a 257-amino-acid chain: 1-(5-phosphoribosyl)-5-[(5-phosphoribosylamino)methylideneamino] imidazole-4-carboxamide isomerase (257 aa).

Belongs to the HisA/HisF family.

The protein localises to the cytoplasm. The enzyme catalyses 1-(5-phospho-beta-D-ribosyl)-5-[(5-phospho-beta-D-ribosylamino)methylideneamino]imidazole-4-carboxamide = 5-[(5-phospho-1-deoxy-D-ribulos-1-ylimino)methylamino]-1-(5-phospho-beta-D-ribosyl)imidazole-4-carboxamide. The protein operates within amino-acid biosynthesis; L-histidine biosynthesis; L-histidine from 5-phospho-alpha-D-ribose 1-diphosphate: step 4/9. The sequence is that of 1-(5-phosphoribosyl)-5-[(5-phosphoribosylamino)methylideneamino] imidazole-4-carboxamide isomerase (his-7) from Neurospora crassa (strain ATCC 24698 / 74-OR23-1A / CBS 708.71 / DSM 1257 / FGSC 987).